A 415-amino-acid polypeptide reads, in one-letter code: Probable peptidoglycan glycosyltransferase FtsW (415 aa).

The next 11 membrane-spanning stretches (helical) occupy residues 31-51 (PILM…VTSA), 63-83 (FFFV…TVWL), 97-117 (LWIL…GIGH), 133-153 (IQVS…YIAT), 162-182 (ITGM…LLLQ), 185-205 (FGTT…ARAQ), 206-226 (WQMM…VVLS), 245-265 (FGHG…GVWG), 285-305 (FIFA…LIGL), 326-346 (IAGA…ALIN), and 361-381 (LPLM…LGFL).

This sequence belongs to the SEDS family. FtsW subfamily.

The protein resides in the cell inner membrane. It carries out the reaction [GlcNAc-(1-&gt;4)-Mur2Ac(oyl-L-Ala-gamma-D-Glu-L-Lys-D-Ala-D-Ala)](n)-di-trans,octa-cis-undecaprenyl diphosphate + beta-D-GlcNAc-(1-&gt;4)-Mur2Ac(oyl-L-Ala-gamma-D-Glu-L-Lys-D-Ala-D-Ala)-di-trans,octa-cis-undecaprenyl diphosphate = [GlcNAc-(1-&gt;4)-Mur2Ac(oyl-L-Ala-gamma-D-Glu-L-Lys-D-Ala-D-Ala)](n+1)-di-trans,octa-cis-undecaprenyl diphosphate + di-trans,octa-cis-undecaprenyl diphosphate + H(+). The protein operates within cell wall biogenesis; peptidoglycan biosynthesis. Functionally, peptidoglycan polymerase that is essential for cell division. In Halothiobacillus neapolitanus (strain ATCC 23641 / c2) (Thiobacillus neapolitanus), this protein is Probable peptidoglycan glycosyltransferase FtsW.